The following is a 386-amino-acid chain: 3-ketoacyl-CoA thiolase (386 aa).

The active-site Acyl-thioester intermediate is the cysteine 91. Residues histidine 342 and cysteine 372 each act as proton acceptor in the active site.

Belongs to the thiolase-like superfamily. Thiolase family. Heterotetramer of two alpha chains (FadB) and two beta chains (FadA).

Its subcellular location is the cytoplasm. The enzyme catalyses an acyl-CoA + acetyl-CoA = a 3-oxoacyl-CoA + CoA. Its pathway is lipid metabolism; fatty acid beta-oxidation. Functionally, catalyzes the final step of fatty acid oxidation in which acetyl-CoA is released and the CoA ester of a fatty acid two carbons shorter is formed. The polypeptide is 3-ketoacyl-CoA thiolase (Pseudoalteromonas atlantica (strain T6c / ATCC BAA-1087)).